The following is a 248-amino-acid chain: MILLISDLHLEQERPDITRAFLALLAGRARTAEALYILGDFFEAWIGDDAMSPFQRSICQALRELSDSGTRIFLMHGNRDFMLGKGFCKAAGCTLLSDPSVVQLNGEPVLLMHGDSLCTRDEGYMRMRRYLRHPLTLFILRHLPLSTRHKLARKLRNESRAQTRMKANDIVDVTPDEVPRIMQQFGVRTLVHGHTHRPAIHKLQIGDQSAKRIVLGDWDRQGWVLQVDEQGMNLGSFDFVPETVALLN.

Positions 7, 9, 40, 78, and 113 each coordinate Mn(2+). Asparagine 78 to arginine 79 lines the substrate pocket. Positions 121, 159, 163, 166, and 194 each coordinate substrate. 2 residues coordinate Mn(2+): histidine 194 and histidine 196.

This sequence belongs to the LpxH family. It depends on Mn(2+) as a cofactor.

The protein resides in the cell inner membrane. The enzyme catalyses UDP-2-N,3-O-bis[(3R)-3-hydroxytetradecanoyl]-alpha-D-glucosamine + H2O = 2-N,3-O-bis[(3R)-3-hydroxytetradecanoyl]-alpha-D-glucosaminyl 1-phosphate + UMP + 2 H(+). It participates in glycolipid biosynthesis; lipid IV(A) biosynthesis; lipid IV(A) from (3R)-3-hydroxytetradecanoyl-[acyl-carrier-protein] and UDP-N-acetyl-alpha-D-glucosamine: step 4/6. Its function is as follows. Hydrolyzes the pyrophosphate bond of UDP-2,3-diacylglucosamine to yield 2,3-diacylglucosamine 1-phosphate (lipid X) and UMP by catalyzing the attack of water at the alpha-P atom. Involved in the biosynthesis of lipid A, a phosphorylated glycolipid that anchors the lipopolysaccharide to the outer membrane of the cell. This chain is UDP-2,3-diacylglucosamine hydrolase, found in Pseudomonas syringae pv. tomato (strain ATCC BAA-871 / DC3000).